We begin with the raw amino-acid sequence, 361 residues long: Phosphoserine aminotransferase (361 aa).

Arg-43 lines the L-glutamate pocket. Pyridoxal 5'-phosphate is bound by residues 77–78 (AS), Trp-103, Thr-153, Asp-173, and Gln-196. Lys-197 is modified (N6-(pyridoxal phosphate)lysine). 238-239 (NT) is a binding site for pyridoxal 5'-phosphate.

This sequence belongs to the class-V pyridoxal-phosphate-dependent aminotransferase family. SerC subfamily. As to quaternary structure, homodimer. Pyridoxal 5'-phosphate is required as a cofactor.

The protein localises to the cytoplasm. It carries out the reaction O-phospho-L-serine + 2-oxoglutarate = 3-phosphooxypyruvate + L-glutamate. The catalysed reaction is 4-(phosphooxy)-L-threonine + 2-oxoglutarate = (R)-3-hydroxy-2-oxo-4-phosphooxybutanoate + L-glutamate. The protein operates within amino-acid biosynthesis; L-serine biosynthesis; L-serine from 3-phospho-D-glycerate: step 2/3. It participates in cofactor biosynthesis; pyridoxine 5'-phosphate biosynthesis; pyridoxine 5'-phosphate from D-erythrose 4-phosphate: step 3/5. Catalyzes the reversible conversion of 3-phosphohydroxypyruvate to phosphoserine and of 3-hydroxy-2-oxo-4-phosphonooxybutanoate to phosphohydroxythreonine. In Pseudomonas syringae pv. tomato (strain ATCC BAA-871 / DC3000), this protein is Phosphoserine aminotransferase.